We begin with the raw amino-acid sequence, 327 residues long: Peroxidase 15 (327 aa).

A signal peptide spans 1–23 (MASFSPLLAMALAIFIFSSHSNA). The residue at position 24 (glutamine 24) is a Pyrrolidone carboxylic acid. Cystine bridges form between cysteine 34/cysteine 115, cysteine 67/cysteine 72, cysteine 121/cysteine 323, and cysteine 200/cysteine 232. N-linked (GlcNAc...) asparagine glycosylation is present at asparagine 36. The active-site Proton acceptor is the histidine 65. Ca(2+) contacts are provided by aspartate 66, valine 69, glycine 71, aspartate 73, and serine 75. N-linked (GlcNAc...) asparagine glycosylation is found at asparagine 81, asparagine 96, and asparagine 159. Proline 163 contacts substrate. 2 N-linked (GlcNAc...) asparagine glycosylation sites follow: asparagine 168 and asparagine 171. Residue histidine 193 coordinates heme b. Ca(2+) is bound at residue threonine 194. Residues asparagine 209 and asparagine 221 are each glycosylated (N-linked (GlcNAc...) asparagine). Aspartate 245, threonine 248, and aspartate 253 together coordinate Ca(2+). N-linked (GlcNAc...) asparagine glycans are attached at residues asparagine 287 and asparagine 291.

Belongs to the peroxidase family. Classical plant (class III) peroxidase subfamily. Ca(2+) is required as a cofactor. Requires heme b as cofactor.

It is found in the secreted. The enzyme catalyses 2 a phenolic donor + H2O2 = 2 a phenolic radical donor + 2 H2O. Its function is as follows. Removal of H(2)O(2), oxidation of toxic reductants, biosynthesis and degradation of lignin, suberization, auxin catabolism, response to environmental stresses such as wounding, pathogen attack and oxidative stress. These functions might be dependent on each isozyme/isoform in each plant tissue. This Ipomoea batatas (Sweet potato) protein is Peroxidase 15.